We begin with the raw amino-acid sequence, 183 residues long: Probable chemoreceptor glutamine deamidase CheD (183 aa).

Belongs to the CheD family.

The catalysed reaction is L-glutaminyl-[protein] + H2O = L-glutamyl-[protein] + NH4(+). Its function is as follows. Probably deamidates glutamine residues to glutamate on methyl-accepting chemotaxis receptors (MCPs), playing an important role in chemotaxis. The polypeptide is Probable chemoreceptor glutamine deamidase CheD (Zymomonas mobilis subsp. mobilis (strain ATCC 31821 / ZM4 / CP4)).